A 415-amino-acid chain; its full sequence is Thyroxine-binding globulin (415 aa).

The first 20 residues, 1-20, serve as a signal peptide directing secretion; the sequence is MSPFLYLVLLVLGLHATIHC. A glycan (N-linked (GlcNAc...) (complex) asparagine) is linked at Asn-36. An N-linked (GlcNAc...) asparagine glycan is attached at Asn-99. A glycan (N-linked (GlcNAc...) asparagine; in variant Gary) is linked at Ile-116. N-linked (GlcNAc...) asparagine glycosylation is found at Asn-165 and Asn-253. 2 residues coordinate thyroxine: Asn-293 and Arg-398.

This sequence belongs to the serpin family. In terms of tissue distribution, expressed by the liver and secreted in plasma.

Its subcellular location is the secreted. Functionally, major thyroid hormone transport protein in serum. The polypeptide is Thyroxine-binding globulin (SERPINA7) (Homo sapiens (Human)).